The primary structure comprises 864 residues: Protein PAT1 homolog 1 (864 aa).

A compositionally biased stretch (polar residues) spans Pro-427–Gly-439. Disordered regions lie at residues Pro-427–Pro-460, Trp-518–Asp-539, and Glu-551–Asn-602. Residues Glu-551–Pro-580 are compositionally biased toward basic and acidic residues.

This sequence belongs to the PAT1 family.

The protein resides in the cytoplasm. Its subcellular location is the P-body. Functionally, RNA-binding protein involved in deadenylation-dependent decapping of mRNAs, leading to the degradation of mRNAs. Acts as a scaffold protein that connects deadenylation and decapping machinery. Required for the recruitment of P-body components such as cgh-1 in somatic blastomeres. May play a role in recruiting the decapping enzyme dcap-1 to cytoplasmic puncta in the cell body of the posterior touch receptor neuron, PLM. This Caenorhabditis briggsae protein is Protein PAT1 homolog 1 (patr-1).